A 717-amino-acid polypeptide reads, in one-letter code: Inhibitor of nuclear factor kappa-B kinase subunit epsilon (717 aa).

Residues 9 to 315 (WHTDDLLGQG…LQRTVIHVFS (307 aa)) form the Protein kinase domain. Residue 15 to 23 (LGQGATASV) participates in ATP binding. Lys30 is covalently cross-linked (Glycyl lysine isopeptide (Lys-Gly) (interchain with G-Cter in ubiquitin)). An ATP-binding site is contributed by Lys38. Asp135 (proton acceptor) is an active-site residue. At Ser172 the chain carries Phosphoserine; by autocatalysis and IKKB. A Glycyl lysine isopeptide (Lys-Gly) (interchain with G-Cter in SUMO1) cross-link involves residue Lys231. An interaction with DDX3X region spans residues 385–650 (SSDTPKGLAF…AQESLNKIFD (266 aa)). A Glycyl lysine isopeptide (Lys-Gly) (interchain with G-Cter in ubiquitin) cross-link involves residue Lys403. Residues 452–473 (LQDTCQQTLEVTRTALLYLSSS) form a leucine-zipper region. Thr503 carries the phosphothreonine modification. Residue Ser665 is modified to Phosphoserine.

Belongs to the protein kinase superfamily. Ser/Thr protein kinase family. I-kappa-B kinase subfamily. Homodimer. Interacts with MAVS/IPS1. Interacts (via protein kinase domain) with TTLL12 (via N-terminus); the interaction prevents MAVS binding to IKBKE. Interacts with the adapter proteins AZI2/NAP1, TANK and TBKBP1/SINTBAD. Interacts with SIKE1. Interacts with TICAM1/TRIF, IRF3 and RIGI; interactions are disrupted by the interaction between IKBKE and SIKE1. Interacts with TOPORS; induced by DNA damage. Interacts with CYLD, IKBKB, IKBKG and MYD88. Interacts with IFIH1. Interacts with DDX3X; the interaction may be induced upon virus infection. Interacts with TRIM6 (via SPRY box). Interacts with unanchored K48-linked polyubiquitin chains; this leads to IKBKE activation. Interacts with TBK1. Interacts with FKBP5. Post-translationally, sumoylation by TOPORS upon DNA damage is required for protection of cells against DNA damage-induced cell death. Desumoylated by SENP1. Autophosphorylated and phosphorylated by IKBKB/IKKB. Phosphorylation at Ser-172 is enhanced by the interaction with DDX3X. Phosphorylated at Thr-503 upon IFN activation. In terms of processing, 'Lys-63'-linked polyubiquitinated at Lys-30 and Lys-403 by TRAF2:BIRC2 and TRAF2:BIRC3 complexes. Ubiquitination is induced by LPS, TNFA and interleukin-1 and required for full kinase activity and KF-kappa-B pathway activation. Expressed in bone marrow-derived macrophages and at low levels in liver and white adipose tissue (at protein level). Detected in muscle and lung.

The protein resides in the cytoplasm. The protein localises to the nucleus. It is found in the PML body. The catalysed reaction is L-seryl-[I-kappa-B protein] + ATP = O-phospho-L-seryl-[I-kappa-B protein] + ADP + H(+). With respect to regulation, kinase activity is inhibited competitively by amlexanox. Its function is as follows. Serine/threonine kinase that plays an essential role in regulating inflammatory responses to viral infection, through the activation of the type I IFN, NF-kappa-B and STAT signaling. Also involved in TNFA and inflammatory cytokines, like Interleukin-1, signaling. Following activation of viral RNA sensors, such as RIG-I-like receptors, associates with DDX3X and phosphorylates interferon regulatory factors (IRFs), IRF3 and IRF7, as well as DDX3X. This activity allows subsequent homodimerization and nuclear translocation of the IRF3 leading to transcriptional activation of pro-inflammatory and antiviral genes including IFNB. In order to establish such an antiviral state, IKBKE forms several different complexes whose composition depends on the type of cell and cellular stimuli. Thus, several scaffolding molecules including IPS1/MAVS, TANK, AZI2/NAP1 or TBKBP1/SINTBAD can be recruited to the IKBKE-containing-complexes. Activated by polyubiquitination in response to TNFA and interleukin-1, regulates the NF-kappa-B signaling pathway through, at least, the phosphorylation of CYLD. Phosphorylates inhibitors of NF-kappa-B thus leading to the dissociation of the inhibitor/NF-kappa-B complex and ultimately the degradation of the inhibitor. In addition, is also required for the induction of a subset of ISGs which displays antiviral activity, may be through the phosphorylation of STAT1 at 'Ser-708'. Phosphorylation of STAT1 at 'Ser-708' also seems to promote the assembly and DNA binding of ISGF3 (STAT1:STAT2:IRF9) complexes compared to GAF (STAT1:STAT1) complexes, in this way regulating the balance between type I and type II IFN responses. Protects cells against DNA damage-induced cell death. Also plays an important role in energy balance regulation by sustaining a state of chronic, low-grade inflammation in obesity, wich leads to a negative impact on insulin sensitivity. Phosphorylates AKT1. This is Inhibitor of nuclear factor kappa-B kinase subunit epsilon (Ikbke) from Mus musculus (Mouse).